A 65-amino-acid polypeptide reads, in one-letter code: Large ribosomal subunit protein bL35 (65 aa).

The segment at 1–25 (MPKLKTKSSAAKRFKKTGKGGFKHR) is disordered.

This sequence belongs to the bacterial ribosomal protein bL35 family.

The chain is Large ribosomal subunit protein bL35 from Francisella tularensis subsp. holarctica (strain FTNF002-00 / FTA).